The chain runs to 67 residues: DNA-directed RNA polymerase subunit omega (67 aa).

The protein belongs to the RNA polymerase subunit omega family. As to quaternary structure, RNAP is composed of a core of 2 alpha, a beta and a beta' subunit. The core is associated with a delta subunit, and at least one of epsilon or omega. When a sigma factor is associated with the core the holoenzyme is formed, which can initiate transcription.

It catalyses the reaction RNA(n) + a ribonucleoside 5'-triphosphate = RNA(n+1) + diphosphate. In terms of biological role, promotes RNA polymerase assembly. Latches the N- and C-terminal regions of the beta' subunit thereby facilitating its interaction with the beta and alpha subunits. In vitro reconstitution experiments this subunit is dispensible. The sequence is that of DNA-directed RNA polymerase subunit omega (rpoZ) from Bacillus subtilis (strain 168).